Here is an 883-residue protein sequence, read N- to C-terminus: Phosphoenolpyruvate carboxylase (883 aa).

Residues His138 and Lys546 contribute to the active site.

Belongs to the PEPCase type 1 family. Mg(2+) is required as a cofactor.

It carries out the reaction oxaloacetate + phosphate = phosphoenolpyruvate + hydrogencarbonate. Functionally, forms oxaloacetate, a four-carbon dicarboxylic acid source for the tricarboxylic acid cycle. This Escherichia coli (strain 55989 / EAEC) protein is Phosphoenolpyruvate carboxylase.